The primary structure comprises 177 residues: Peptidyl-tRNA hydrolase 1 (177 aa).

Y18 contacts tRNA. Catalysis depends on H23, which acts as the Proton acceptor. Residues F65, N67, and N113 each coordinate tRNA.

The protein belongs to the PTH family. Monomer.

The protein localises to the cytoplasm. It catalyses the reaction an N-acyl-L-alpha-aminoacyl-tRNA + H2O = an N-acyl-L-amino acid + a tRNA + H(+). Functionally, hydrolyzes ribosome-free peptidyl-tRNAs (with 1 or more amino acids incorporated), which drop off the ribosome during protein synthesis, or as a result of ribosome stalling. Its function is as follows. Catalyzes the release of premature peptidyl moieties from peptidyl-tRNA molecules trapped in stalled 50S ribosomal subunits, and thus maintains levels of free tRNAs and 50S ribosomes. This Corynebacterium glutamicum (strain ATCC 13032 / DSM 20300 / JCM 1318 / BCRC 11384 / CCUG 27702 / LMG 3730 / NBRC 12168 / NCIMB 10025 / NRRL B-2784 / 534) protein is Peptidyl-tRNA hydrolase 1.